The following is a 173-amino-acid chain: Ribonuclease H (173 aa).

Residues 1 to 20 (MKATSKAKTHPPGATAAKDP) form a disordered region. An RNase H type-1 domain is found at 20-162 (PQKQVIIYTD…CDVLSKEAAG (143 aa)). Mg(2+) is bound by residues D29, E67, D89, and D154.

This sequence belongs to the RNase H family. In terms of assembly, monomer. It depends on Mg(2+) as a cofactor.

It localises to the cytoplasm. The enzyme catalyses Endonucleolytic cleavage to 5'-phosphomonoester.. Functionally, endonuclease that specifically degrades the RNA of RNA-DNA hybrids. This chain is Ribonuclease H, found in Syntrophus aciditrophicus (strain SB).